Here is a 182-residue protein sequence, read N- to C-terminus: U1 small nuclear ribonucleoprotein C (182 aa).

The segment at 4-36 (YLCDYCQVWLTHDSQSVRKAHNAGRAHIQNVQD) adopts a Matrin-type zinc-finger fold. Positions 129–182 (PQTTASSNTQLTQQQQSLPQTNEHQRARTHSNANNHFTKTHHQGQRSHQRFVRA) are disordered. The span at 130-150 (QTTASSNTQLTQQQQSLPQTN) shows a compositional bias: low complexity. Positions 166 to 182 (TKTHHQGQRSHQRFVRA) are enriched in basic residues.

This sequence belongs to the U1 small nuclear ribonucleoprotein C family. U1 snRNP is composed of the 7 core Sm proteins smb1, smd1, smd2, smd3, sme1, smf1 and smg1 (Sm proteins B, D1, D2, D3, E, F and G, respectively) that assemble in a heptameric protein ring on the Sm site of the small nuclear RNA to form the core snRNP, and at least 9 U1 snRNP-specific proteins usp101/U1-70K, usp102/U1-A, usp103/U1-C, usp106/LUC7, usp105/PRP39, usp104/PRP40, usp107/U1-H, usp108/U1-J and usp109/U1-L. usp103/U1-C interacts with U1 snRNA and the 5' splice-site region of the pre-mRNA.

The protein resides in the nucleus. In terms of biological role, component of the spliceosomal U1 snRNP, which is essential for recognition of the pre-mRNA 5' splice-site and the subsequent assembly of the spliceosome. usp103/U1-C is directly involved in initial 5' splice-site recognition for both constitutive and regulated alternative splicing. The interaction with the 5' splice-site seems to precede base-pairing between the pre-mRNA and the U1 snRNA. Stimulates commitment or early (E) complex formation by stabilizing the base pairing of the 5' end of the U1 snRNA and the 5' splice-site region. The protein is U1 small nuclear ribonucleoprotein C (usp103) of Schizosaccharomyces pombe (strain 972 / ATCC 24843) (Fission yeast).